The chain runs to 472 residues: DEAD-box ATP-dependent RNA helicase 58, chloroplastic (472 aa).

The transit peptide at M1–V54 directs the protein to the chloroplast. The Q motif motif lies at R76–R104. The 180-residue stretch at L107–R286 folds into the Helicase ATP-binding domain. A120–T127 is a binding site for ATP. The DEAD box signature appears at D231–D234. The 159-residue stretch at N314–L472 folds into the Helicase C-terminal domain.

This sequence belongs to the DEAD box helicase family.

It is found in the plastid. Its subcellular location is the chloroplast. It catalyses the reaction ATP + H2O = ADP + phosphate + H(+). The polypeptide is DEAD-box ATP-dependent RNA helicase 58, chloroplastic (RH58) (Arabidopsis thaliana (Mouse-ear cress)).